Here is a 435-residue protein sequence, read N- to C-terminus: MSGYFSGFSLNKITDSIATAAHKTQDTLNNALANANVNLNDPQTRLSIKSRTRFVQESLGTVSDISKLPPQYQFLEKKSDSLEKVCKRILLVSKTFEVEGYDYPPNLTESISDWWSLNKDGWFGSKKSESSTKKKGSNHDDAFLPRSFAQAISKAAVDCECEFQNLEHNEKAELKKKKESIKTAQTTEAQGADHNEEDEEDEEDEEDDEDLSNLIKVFDSWSTCYKNIDEGKAEMDSMMVKEFNKKLETLINQDFKKVHDLRKKVEESRLKFDTMRYEVKAKEAELEAKKAEATGEAHSKDVSAKDISANTTTSFDETPSTEDEKPKSEGAEEESKKEANEPTVDDVADRKEDLKSNKVNDEPPIEESEDNKLLEKLEDEFVSNTTAAVETMEEITDSSEILGLIKLFQNFQLVYFRQCVQEVEANLKVLNGLEI.

At S47 the chain carries Phosphoserine. Disordered stretches follow at residues 174-210 and 290-372; these read LKKK…DDED and KAEA…EDNK. The span at 195–210 shows a compositional bias: acidic residues; it reads NEEDEEDEEDEEDDED. Residues 290-304 are compositionally biased toward basic and acidic residues; it reads KAEATGEAHSKDVSA. Positions 308-318 are enriched in polar residues; sequence SANTTTSFDET. Composition is skewed to basic and acidic residues over residues 322-340 and 347-361; these read EDEK…KEAN and VADR…KVND.

The protein resides in the cytoplasm. This is an uncharacterized protein from Saccharomyces cerevisiae (strain ATCC 204508 / S288c) (Baker's yeast).